Reading from the N-terminus, the 96-residue chain is Co-chaperonin GroES (96 aa).

The interval 26 to 48 is disordered; the sequence is LLPGSAQEKPSQGEVLATGNGQI.

The protein belongs to the GroES chaperonin family. Heptamer of 7 subunits arranged in a ring. Interacts with the chaperonin GroEL.

It localises to the cytoplasm. Together with the chaperonin GroEL, plays an essential role in assisting protein folding. The GroEL-GroES system forms a nano-cage that allows encapsulation of the non-native substrate proteins and provides a physical environment optimized to promote and accelerate protein folding. GroES binds to the apical surface of the GroEL ring, thereby capping the opening of the GroEL channel. This chain is Co-chaperonin GroES, found in Psychrobacter arcticus (strain DSM 17307 / VKM B-2377 / 273-4).